We begin with the raw amino-acid sequence, 554 residues long: Dihydroxy-acid dehydratase (554 aa).

Asp78 contributes to the Mg(2+) binding site. Cys119 is a binding site for [2Fe-2S] cluster. Residues Asp120 and Lys121 each coordinate Mg(2+). Lys121 carries the post-translational modification N6-carboxylysine. Residue Cys192 participates in [2Fe-2S] cluster binding. A Mg(2+)-binding site is contributed by Glu443. The Proton acceptor role is filled by Ser469.

This sequence belongs to the IlvD/Edd family. Homodimer. [2Fe-2S] cluster serves as cofactor. The cofactor is Mg(2+).

It catalyses the reaction (2R)-2,3-dihydroxy-3-methylbutanoate = 3-methyl-2-oxobutanoate + H2O. The enzyme catalyses (2R,3R)-2,3-dihydroxy-3-methylpentanoate = (S)-3-methyl-2-oxopentanoate + H2O. It participates in amino-acid biosynthesis; L-isoleucine biosynthesis; L-isoleucine from 2-oxobutanoate: step 3/4. Its pathway is amino-acid biosynthesis; L-valine biosynthesis; L-valine from pyruvate: step 3/4. Functions in the biosynthesis of branched-chain amino acids. Catalyzes the dehydration of (2R,3R)-2,3-dihydroxy-3-methylpentanoate (2,3-dihydroxy-3-methylvalerate) into 2-oxo-3-methylpentanoate (2-oxo-3-methylvalerate) and of (2R)-2,3-dihydroxy-3-methylbutanoate (2,3-dihydroxyisovalerate) into 2-oxo-3-methylbutanoate (2-oxoisovalerate), the penultimate precursor to L-isoleucine and L-valine, respectively. This Shouchella clausii (strain KSM-K16) (Alkalihalobacillus clausii) protein is Dihydroxy-acid dehydratase.